A 356-amino-acid chain; its full sequence is N-methyltransferase 4 (356 aa).

S-adenosyl-L-methionine is bound by residues 93–94 (QS), 128–136 (ILDIGCGFG), and 155–160 (TNSAEQ).

This sequence belongs to the CFA/CMAS family. In terms of tissue distribution, expressed in stems, roots, flower buds and leaves.

In terms of biological role, probable N-methyltransferase not involved in benzylisoquinoline metabolism. Shows no detectable activity with (s)-coclaurine, (R)- or (S)-reticuline, papaverine or (R,S)-tetrahydropapaverine. The protein is N-methyltransferase 4 (NMT4) of Papaver somniferum (Opium poppy).